The primary structure comprises 199 residues: Inosine triphosphate pyrophosphatase (199 aa).

Thr-12 to Lys-17 is a binding site for ITP. Glu-42 is a binding site for Mg(2+). Residues Lys-54, Asp-70–Thr-71, Lys-87, Phe-146–Asp-149, Lys-169, and His-174–Arg-175 contribute to the ITP site.

It belongs to the HAM1 NTPase family. As to quaternary structure, homodimer. The cofactor is Mg(2+). Mn(2+) serves as cofactor.

It is found in the cytoplasm. The enzyme catalyses ITP + H2O = IMP + diphosphate + H(+). It carries out the reaction dITP + H2O = dIMP + diphosphate + H(+). The catalysed reaction is XTP + H2O = XMP + diphosphate + H(+). In terms of biological role, pyrophosphatase that hydrolyzes non-canonical purine nucleotides such as inosine triphosphate (ITP), deoxyinosine triphosphate (dITP) or xanthosine 5'-triphosphate (XTP) to their respective monophosphate derivatives. The enzyme does not distinguish between the deoxy- and ribose forms. Probably excludes non-canonical purines from RNA and DNA precursor pools, thus preventing their incorporation into RNA and DNA and avoiding chromosomal lesions. The protein is Inosine triphosphate pyrophosphatase of Monosiga brevicollis (Choanoflagellate).